Reading from the N-terminus, the 147-residue chain is Plasminogen receptor (KT) (147 aa).

Residues 1-52 (MGFIFSKSMNENMKNQQEFMVTHARLQLERHLTMQNEMRERQMAMQIAWSRE) lie on the Extracellular side of the membrane. Residues 53 to 73 (FLKYFGTFFGIATISLATGAL) form a helical membrane-spanning segment. Topologically, residues 74 to 78 (KRKKP) are cytoplasmic. A helical transmembrane segment spans residues 79 to 99 (AFLVPIVPLSFIFTYQYDLGY). At 100 to 147 (GTLLQRMKSEAEDILETEKTKLELPKGLITFESLEKARREQSKLFSDK) the chain is on the extracellular side.

In terms of assembly, interacts with PLAT. Interacts with PLAUR. Expressed in monocytes; detected in differentiated monocytes but not in progenitor cells. Expressed in adrenal medulla and hippocampus.

It is found in the cell membrane. Its function is as follows. Receptor for plasminogen. Regulates urokinase plasminogen activator-dependent and stimulates tissue-type plasminogen activator-dependent cell surface plasminogen activation. Proposed to be part of a local catecholaminergic cell plasminogen activation system that regulates neuroendocrine prohormone processing. Involved in regulation of inflammatory response; regulates monocyte chemotactic migration and matrix metalloproteinase activation, such as of MMP2 and MMP9. The sequence is that of Plasminogen receptor (KT) (Plgrkt) from Mus musculus (Mouse).